The chain runs to 501 residues: U6 snRNA (guanine-N(2))-methyltransferase THUMPD2 (501 aa).

The THUMP domain occupies 149–264 (TEQIQELQET…DVYSVLGIPV (116 aa)). The tract at residues 414–469 (LKGGEASSGPLNSQGGHTEEPGGEERLTPAEKAAVSEPVSSPFAASNQGRLDRMPP) is disordered. Residues 430-442 (HTEEPGGEERLTP) show a composition bias toward basic and acidic residues.

The protein belongs to the methyltransferase superfamily. As to quaternary structure, part of the heterodimeric THUMPD2-TRM112 methyltransferase complex; this complex forms an active tRNA methyltransferase, where TRMT112 acts as an activator of the catalytic subunit THUMPD2.

Its subcellular location is the nucleus. The enzyme catalyses guanosine in U6 snRNA + S-adenosyl-L-methionine = N(2)-methylguanosine in U6 snRNA + S-adenosyl-L-homocysteine + H(+). In terms of biological role, catalytic subunit of the THUMPD2-TRM112 methyltransferase complex, that specifically mediates the S-adenosyl-L-methionine-dependent N(2)-methylation of guanosine nucleotides, most probably at position 72 (m2G72), in the U6snRNA of the major spliceosome. This modification in the U6 snRNA affects the constitutive splicing efficiency of introns that have suboptimal splice sites and can impact final mRNA levels. The sequence is that of U6 snRNA (guanine-N(2))-methyltransferase THUMPD2 from Bos taurus (Bovine).